The sequence spans 215 residues: Probable phosphoglycerate mutase GpmB (215 aa).

Residues 8–15, 21–22, R58, R60, 82–85, 104–105, and 151–152 each bind substrate; these read RHGETQWN, QG, ELNM, RR, and GI. H9 acts as the Tele-phosphohistidine intermediate in catalysis. E82 functions as the Proton donor/acceptor in the catalytic mechanism.

This sequence belongs to the phosphoglycerate mutase family. GpmB subfamily.

It carries out the reaction (2R)-2-phosphoglycerate = (2R)-3-phosphoglycerate. It participates in carbohydrate degradation; glycolysis; pyruvate from D-glyceraldehyde 3-phosphate: step 3/5. This Escherichia fergusonii (strain ATCC 35469 / DSM 13698 / CCUG 18766 / IAM 14443 / JCM 21226 / LMG 7866 / NBRC 102419 / NCTC 12128 / CDC 0568-73) protein is Probable phosphoglycerate mutase GpmB.